The following is a 404-amino-acid chain: CinA-like protein (404 aa).

The protein belongs to the CinA family.

The sequence is that of CinA-like protein from Deinococcus radiodurans (strain ATCC 13939 / DSM 20539 / JCM 16871 / CCUG 27074 / LMG 4051 / NBRC 15346 / NCIMB 9279 / VKM B-1422 / R1).